A 712-amino-acid polypeptide reads, in one-letter code: Transcriptional regulator GZF3 (712 aa).

The span at methionine 1–proline 13 shows a compositional bias: polar residues. 5 disordered regions span residues methionine 1–valine 20, asparagine 27–cysteine 135, serine 173–leucine 280, aspartate 377–phenylalanine 533, and leucine 596–isoleucine 712. Composition is skewed to low complexity over residues asparagine 27–serine 84 and proline 107–serine 131. Residues cysteine 135–cysteine 159 form a GATA-type zinc finger. Over residues lysine 186 to glycine 199 the composition is skewed to low complexity. Residues glycine 213–serine 223 show a composition bias toward basic residues. A compositionally biased stretch (polar residues) spans alanine 246 to serine 261. The segment covering asparagine 268–leucine 280 has biased composition (basic residues). The segment covering serine 379–glycine 414 has biased composition (low complexity). Polar residues-rich tracts occupy residues serine 429–glutamine 447 and glutamine 484–isoleucine 498. Low complexity-rich tracts occupy residues asparagine 499–asparagine 532 and leucine 596–glutamine 616. A coiled-coil region spans residues threonine 545–asparagine 598. Over residues aspartate 631–histidine 667 the composition is skewed to polar residues.

Its subcellular location is the nucleus. Functionally, probable transcription factor involved in response to fluconazole, LiCl, and copper. The protein is Transcriptional regulator GZF3 (GZF3) of Candida albicans (strain SC5314 / ATCC MYA-2876) (Yeast).